A 276-amino-acid chain; its full sequence is Energy-coupling factor transporter ATP-binding protein EcfA1 (276 aa).

The region spanning 2-237 (IEIKNLKFKY…GSELVDLGLD (236 aa)) is the ABC transporter domain. 37–44 (GHNGSGKS) is an ATP binding site.

This sequence belongs to the ABC transporter superfamily. Energy-coupling factor EcfA family. As to quaternary structure, forms a stable energy-coupling factor (ECF) transporter complex composed of 2 membrane-embedded substrate-binding proteins (S component), 2 ATP-binding proteins (A component) and 2 transmembrane proteins (T component).

The protein localises to the cell membrane. In terms of biological role, ATP-binding (A) component of a common energy-coupling factor (ECF) ABC-transporter complex. Unlike classic ABC transporters this ECF transporter provides the energy necessary to transport a number of different substrates. This Streptococcus thermophilus (strain CNRZ 1066) protein is Energy-coupling factor transporter ATP-binding protein EcfA1.